A 200-amino-acid chain; its full sequence is dITP/XTP pyrophosphatase (200 aa).

Position 7-12 (7-12 (SNNYHK)) interacts with substrate. Catalysis depends on aspartate 68, which acts as the Proton acceptor. Aspartate 68 contributes to the Mg(2+) binding site. Residues serine 69, 147 to 150 (FGYD), lysine 170, and 175 to 176 (HR) contribute to the substrate site.

It belongs to the HAM1 NTPase family. In terms of assembly, homodimer. Requires Mg(2+) as cofactor.

It carries out the reaction XTP + H2O = XMP + diphosphate + H(+). The enzyme catalyses dITP + H2O = dIMP + diphosphate + H(+). It catalyses the reaction ITP + H2O = IMP + diphosphate + H(+). In terms of biological role, pyrophosphatase that catalyzes the hydrolysis of nucleoside triphosphates to their monophosphate derivatives, with a high preference for the non-canonical purine nucleotides XTP (xanthosine triphosphate), dITP (deoxyinosine triphosphate) and ITP. Seems to function as a house-cleaning enzyme that removes non-canonical purine nucleotides from the nucleotide pool, thus preventing their incorporation into DNA/RNA and avoiding chromosomal lesions. This chain is dITP/XTP pyrophosphatase, found in Acholeplasma laidlawii (strain PG-8A).